The sequence spans 147 residues: 3-dehydroquinate dehydratase (147 aa).

Residue Y24 is the Proton acceptor of the active site. 3 residues coordinate substrate: N75, H81, and D88. H101 functions as the Proton donor in the catalytic mechanism. Residues 102 to 103 (LS) and R112 each bind substrate.

It belongs to the type-II 3-dehydroquinase family. Homododecamer.

It catalyses the reaction 3-dehydroquinate = 3-dehydroshikimate + H2O. It participates in metabolic intermediate biosynthesis; chorismate biosynthesis; chorismate from D-erythrose 4-phosphate and phosphoenolpyruvate: step 3/7. Catalyzes a trans-dehydration via an enolate intermediate. In Caulobacter sp. (strain K31), this protein is 3-dehydroquinate dehydratase.